Reading from the N-terminus, the 354-residue chain is tRNA N6-adenosine threonylcarbamoyltransferase (354 aa).

Positions 121, 125, and 142 each coordinate a divalent metal cation. Residues tyrosine 142–glycine 146, aspartate 174, glycine 189, glutamate 193, and asparagine 285 contribute to the substrate site. Aspartate 313 provides a ligand contact to a divalent metal cation.

It belongs to the KAE1 / TsaD family. As to quaternary structure, component of the EKC/KEOPS complex composed of at least bud32, cgi121, gon7, kae1 and pcc1; the whole complex dimerizes. The cofactor is a divalent metal cation.

The protein localises to the cytoplasm. Its subcellular location is the nucleus. The enzyme catalyses L-threonylcarbamoyladenylate + adenosine(37) in tRNA = N(6)-L-threonylcarbamoyladenosine(37) in tRNA + AMP + H(+). Functionally, component of the EKC/KEOPS complex that is required for the formation of a threonylcarbamoyl group on adenosine at position 37 (t(6)A37) in tRNAs that read codons beginning with adenine. The complex is probably involved in the transfer of the threonylcarbamoyl moiety of threonylcarbamoyl-AMP (TC-AMP) to the N6 group of A37. Kae1 likely plays a direct catalytic role in this reaction, but requires other protein(s) of the complex to fulfill this activity. The EKC/KEOPS complex also promotes both telomere uncapping and telomere elongation. The complex is required for efficient recruitment of transcriptional coactivators. This is tRNA N6-adenosine threonylcarbamoyltransferase (gpe-1) from Neurospora crassa (strain ATCC 24698 / 74-OR23-1A / CBS 708.71 / DSM 1257 / FGSC 987).